Reading from the N-terminus, the 232-residue chain is MRVLLIEDDSAIAQSIELMLKSESFNVYTTDLGEEGIDLGKLYDYDIILLDLNLPDMSGYEVLRTLRLSKVKTPILILSGMAGIEDKVRGLGFGADDYMTKPFHKDELIARIHAIVRRSKGHAQSVITTGDLVVNLDAKTVEVSGQRVHLTGKEYQMLELLSLRKGTTLTKEMFLNHLYGGMDEPELKIIDVFICKLRKKLDAVSGSQSYIETVWGRGYVLREPDAEMRESA.

The region spanning 2 to 116 (RVLLIEDDSA…ELIARIHAIV (115 aa)) is the Response regulatory domain. 4-aspartylphosphate is present on Asp-51. Positions 124-223 (QSVITTGDLV…VWGRGYVLRE (100 aa)) form a DNA-binding region, ompR/PhoB-type.

The protein localises to the cytoplasm. Functionally, essential protein that plays a role in the control of cell division, possibly through the transcriptional regulation of ccrM, rpoD, pleC, minC and ftsZ genes. The protein is Cell cycle response regulator CtrA (ctrA) of Brucella anthropi (strain ATCC 49188 / DSM 6882 / CCUG 24695 / JCM 21032 / LMG 3331 / NBRC 15819 / NCTC 12168 / Alc 37) (Ochrobactrum anthropi).